We begin with the raw amino-acid sequence, 340 residues long: Protein-tyrosine-phosphatase PTP1 (340 aa).

The Tyrosine-protein phosphatase domain maps to Ile-58–Glu-326. Residues Asp-234, Cys-265–Arg-271, and Gln-311 each bind substrate. The active-site Phosphocysteine intermediate is the Cys-265.

As to quaternary structure, interacts with MPK6. Interacts with KIN10. Post-translationally, phosphorylated by KIN10. As to expression, expressed in roots, stems and flowers, and at low levels in leaves.

The protein localises to the cytoplasm. It is found in the cytosol. The protein resides in the nucleus. It catalyses the reaction O-phospho-L-tyrosyl-[protein] + H2O = L-tyrosyl-[protein] + phosphate. Inhibited by hydrogen peroxide. In terms of biological role, protein-tyrosine-phosphatase that dephosphorylates and probably inhibits MPK6 in non-oxidative stress conditions. In association with MKP1, represses salicylic acid (SA) and camalexin biosynthesis, thus modulating defense response. May also repress MPK3. Dephosphorylates and inactivates MPK4 in vitro. In Arabidopsis thaliana (Mouse-ear cress), this protein is Protein-tyrosine-phosphatase PTP1 (PTP1).